A 499-amino-acid chain; its full sequence is Zinc finger protein PLAG1 (499 aa).

The interval 1–33 (MATVIPGDLSEVRDTQKAPSGKRKRGESKPRKN) is disordered. Residues 2–84 (ATVIPGDLSE…SKYKLQRHMA (83 aa)) are interaction with KPNA2. Positions 22-25 (KRKR) match the Nuclear localization signal motif. C2H2-type zinc fingers lie at residues 34 to 56 (FPCQ…SFSH), 62 to 86 (YKCT…MATH), 92 to 114 (HKCN…LHTH), 121 to 143 (FKCE…LALH), 150 to 172 (LTCK…LKSH), 185 to 207 (HQCE…MVVH), and 213 to 236 (FLCQ…KKSH). Residues 41-242 (KAFNSVEKLK…KKSHNQELLK (202 aa)) are decreased nuclear import with localization in the nucleus but also in the cytoplasm. The segment at 243-383 (VKTEPVDFLD…SPASSSKLGL (141 aa)) is repression domain; contains 3 sumoylation motifs and massively decrease transcription activity. Positions 243–499 (VKTEPVDFLD…TLPRFHQAFQ (257 aa)) are activates transcription; Inhibition of nuclear import due to lack of NLS and KPNA2 interaction. Glycyl lysine isopeptide (Lys-Gly) (interchain with G-Cter in SUMO) cross-links involve residues Lys244 and Lys263. Positions 365 to 379 (GGAPSSSQDSPASSS) are enriched in low complexity. Positions 365–400 (GGAPSSSQDSPASSSKLGLEPQSGSPDDGAGDLSLS) are disordered. The tract at residues 384 to 499 (EPQSGSPDDG…TLPRFHQAFQ (116 aa)) is massively activates transcription.

This sequence belongs to the krueppel C2H2-type zinc-finger protein family. In terms of assembly, interacts with KPNA2, which escorts protein to the nucleus via interaction with nuclear localization signal. Interacts with E3 SUMO-protein ligase PIAS1, PIAS2 and PIAS4. Sumoylated with SUMO1; which inhibits transcriptional activity, but does not affect nuclear localization. Blockers of sumoylation pathway such as SENP3 and inactive UBE2I increases transcriptional capacity. Sumoylation is increased in the presence of PIAS1. In terms of processing, acetylated by lysine acetyltransferase EP300; which activates transcriptional capacity. Lysine residues that are sumoylated also seem to be target for acetylation. As to expression, expressed in heart, spleen, lung, kidney, brain, testis and epididymis but not in salivary glands.

It is found in the nucleus. In terms of biological role, transcription factor whose activation results in up-regulation of target genes, such as IGFII, leading to uncontrolled cell proliferation: when overexpressed in cultured cells, higher proliferation rate and transformation are observed. Other target genes such as CRLF1, CRABP2, CRIP2, PIGF are strongly induced in cells with PLAG1 induction. Proto-oncogene whose ectopic expression can trigger the development of pleomorphic adenomas of the salivary gland and lipoblastomas. Cooperates with CBFB-MYH11. The chain is Zinc finger protein PLAG1 (Plag1) from Mus musculus (Mouse).